The primary structure comprises 219 residues: Small ribosomal subunit protein eS1 (219 aa).

Belongs to the eukaryotic ribosomal protein eS1 family. In terms of assembly, component of the small ribosomal subunit. Mature ribosomes consist of a small (40S) and a large (60S) subunit. The 40S subunit contains about 33 different proteins and 1 molecule of RNA (18S). The 60S subunit contains about 49 different proteins and 3 molecules of RNA (25S, 5.8S and 5S).

Its subcellular location is the cytoplasm. The polypeptide is Small ribosomal subunit protein eS1 (Guillardia theta (Cryptophyte)).